A 433-amino-acid polypeptide reads, in one-letter code: Legumain (433 aa).

Residues 1 to 17 (MVWKVAVFLSAALVIGA) form the signal peptide. An N-linked (GlcNAc...) asparagine glycan is attached at Asn91. Residue His148 is part of the active site. Residue Asn167 is glycosylated (N-linked (GlcNAc...) asparagine). Cys189 functions as the Nucleophile in the catalytic mechanism. N-linked (GlcNAc...) asparagine glycans are attached at residues Asn263 and Asn272. Residues 324–433 (DLEESRQLTE…SMDHVCLGHY (110 aa)) constitute a propeptide that is removed on maturation. 2 disulfides stabilise this stretch: Cys378–Cys412 and Cys390–Cys429.

The protein belongs to the peptidase C13 family. In terms of assembly, homodimer before autocatalytic removal of the propeptide. Monomer after autocatalytic processing. May interact with integrins. In terms of processing, activated by autocatalytic processing at pH 4.

It is found in the lysosome. It carries out the reaction Hydrolysis of proteins and small molecule substrates at -Asn-|-Xaa- bonds.. Functionally, has a strict specificity for hydrolysis of asparaginyl bonds. Can also cleave aspartyl bonds slowly, especially under acidic conditions. Involved in the processing of proteins for MHC class II antigen presentation in the lysosomal/endosomal system. Also involved in MHC class I antigen presentation in cross-presenting dendritic cells by mediating cleavage and maturation of Perforin-2 (MPEG1), thereby promoting antigen translocation in the cytosol. Required for normal lysosomal protein degradation in renal proximal tubules. Required for normal degradation of internalized EGFR. Plays a role in the regulation of cell proliferation via its role in EGFR degradation. The chain is Legumain (LGMN) from Pongo abelii (Sumatran orangutan).